The chain runs to 240 residues: Ornithine decarboxylase antizyme (240 aa).

2 disordered regions span residues 18 to 45 (RSEPISSSNRATKRTISSSSSSSSSSAG) and 69 to 95 (DHDRASPLKEYNRKTSIDSTTTASSEF). The span at 21–33 (PISSSNRATKRTI) shows a compositional bias: polar residues. The segment covering 34-43 (SSSSSSSSSS) has biased composition (low complexity). The span at 69–84 (DHDRASPLKEYNRKTS) shows a compositional bias: basic and acidic residues. Positions 85–95 (IDSTTTASSEF) are enriched in polar residues.

The protein belongs to the ODC antizyme family. Interacts with ODC1 and thereby sterically blocks ODC homodimerization. As to expression, preferentially expressed in adult female midguts.

Ornithine decarboxylase (ODC) antizyme protein that negatively regulates ODC activity and intracellular polyamine biosynthesis and uptake in response to increased intracellular polyamine levels. Binds to ODC monomers, inhibiting the assembly of the functional ODC homodimer, and targets the monomers for ubiquitin-independent proteolytic destruction by the 26S proteasome. The chain is Ornithine decarboxylase antizyme (Oda) from Aedes aegypti (Yellowfever mosquito).